Here is a 220-residue protein sequence, read N- to C-terminus: Probable transcriptional regulator NRG2 (220 aa).

C2H2-type zinc fingers lie at residues 153 to 175 (HFCKICSTGFTTSGHLSRHNRIH) and 181 to 205 (HICPHEGCGQRFSRHDNCNQHYRTH).

Its subcellular location is the nucleus. Functionally, transcriptional repressor. The protein is Probable transcriptional regulator NRG2 (NRG2) of Saccharomyces cerevisiae (strain ATCC 204508 / S288c) (Baker's yeast).